Here is a 376-residue protein sequence, read N- to C-terminus: ATP phosphoribosyltransferase regulatory subunit (376 aa).

Belongs to the class-II aminoacyl-tRNA synthetase family. HisZ subfamily. In terms of assembly, heteromultimer composed of HisG and HisZ subunits.

The protein localises to the cytoplasm. The protein operates within amino-acid biosynthesis; L-histidine biosynthesis; L-histidine from 5-phospho-alpha-D-ribose 1-diphosphate: step 1/9. Its function is as follows. Required for the first step of histidine biosynthesis. May allow the feedback regulation of ATP phosphoribosyltransferase activity by histidine. The protein is ATP phosphoribosyltransferase regulatory subunit of Brucella anthropi (strain ATCC 49188 / DSM 6882 / CCUG 24695 / JCM 21032 / LMG 3331 / NBRC 15819 / NCTC 12168 / Alc 37) (Ochrobactrum anthropi).